A 428-amino-acid polypeptide reads, in one-letter code: Elongation factor 1-alpha (428 aa).

The tr-type G domain maps to 5-225; sequence KPILNVAFIG…DAFQPPEKPT (221 aa). The segment at 14–21 is G1; it reads GHVDAGKS. 14–21 is a binding site for GTP; it reads GHVDAGKS. S21 provides a ligand contact to Mg(2+). Residues 70-74 are G2; it reads GVTID. The G3 stretch occupies residues 91 to 94; that stretch reads DCPG. GTP-binding positions include 91–95 and 149–152; these read DCPGH and NKMD. The G4 stretch occupies residues 149–152; that stretch reads NKMD. Residues 189-191 are G5; that stretch reads ASL.

This sequence belongs to the TRAFAC class translation factor GTPase superfamily. Classic translation factor GTPase family. EF-Tu/EF-1A subfamily.

The protein localises to the cytoplasm. The catalysed reaction is GTP + H2O = GDP + phosphate + H(+). Its function is as follows. GTP hydrolase that promotes the GTP-dependent binding of aminoacyl-tRNA to the A-site of ribosomes during protein biosynthesis. This is Elongation factor 1-alpha from Methanococcus maripaludis (strain C5 / ATCC BAA-1333).